A 335-amino-acid polypeptide reads, in one-letter code: Pharynx and intestine in excess protein 1 (335 aa).

Residue Lys-68 forms a Glycyl lysine isopeptide (Lys-Gly) (interchain with G-Cter in SUMO) linkage. A C3H1-type 1 zinc finger spans residues 98–126; that stretch reads EYKTRLCDAFRREGYCPYNDNCTYAHGQD. Residues 130–156 show a composition bias toward basic and acidic residues; sequence VPRRRQEYYSRDPPRERRDSRSRRDDV. The disordered stretch occupies residues 130–188; sequence VPRRRQEYYSRDPPRERRDSRSRRDDVDTTINRSSSSASKHHDENRRPSNNHGSSNRRQ. Composition is skewed to polar residues over residues 158–167 and 177–187; these read TTINRSSSSA and PSNNHGSSNRR. A C3H1-type 2 zinc finger spans residues 184–211; the sequence is SNRRQICHNFERGNCRYGPRCRFIHVEQ. Residues 288 to 291 form a required for inhibition of Ser-2 phosphorylation region; it reads MAPT.

As to quaternary structure, interacts with hda-1, let-418 and mep-1. Interacts (via C terminus) with cit-1.1 (via C terminus). In terms of processing, sumoylated in adult germ cells.

The protein localises to the nucleus. The protein resides in the cytoplasm. It is found in the cytoskeleton. It localises to the microtubule organizing center. Its subcellular location is the centrosome. The protein localises to the spindle. The protein resides in the cytoplasmic granule. Maternally provided pie-1 is required for germline cell fate determination. Functions as a repressor of RNA polymerase II-dependent gene expression in the developing germline. Required for expression of nos-2 in P4 germline blastomere cells. Inhibits the histone deacetylase activity of hda-1. Represses transcriptional activation of cdk-9 and cit-1.1, which are members of the P-TEFb complex. Acts redundantly with gei-17 to promote piRNA-mediated silencing and fertility in adult germline. Promotes the sumoylation of hda-1 in adult animals but not in embryos thereby regulating its interaction with mep-1. This is Pharynx and intestine in excess protein 1 from Caenorhabditis elegans.